The chain runs to 400 residues: tRNA(Ile)-lysidine synthase (400 aa).

20-25 is a binding site for ATP; sequence SGGLDS.

The protein belongs to the tRNA(Ile)-lysidine synthase family.

The protein resides in the cytoplasm. It carries out the reaction cytidine(34) in tRNA(Ile2) + L-lysine + ATP = lysidine(34) in tRNA(Ile2) + AMP + diphosphate + H(+). In terms of biological role, ligates lysine onto the cytidine present at position 34 of the AUA codon-specific tRNA(Ile) that contains the anticodon CAU, in an ATP-dependent manner. Cytidine is converted to lysidine, thus changing the amino acid specificity of the tRNA from methionine to isoleucine. The polypeptide is tRNA(Ile)-lysidine synthase (Wigglesworthia glossinidia brevipalpis).